Consider the following 397-residue polypeptide: CCA-adding enzyme (397 aa).

Gly26 and Arg29 together coordinate ATP. 2 residues coordinate CTP: Gly26 and Arg29. Residues Asp39 and Asp41 each coordinate Mg(2+). Positions 110, 153, 156, 159, and 162 each coordinate ATP. CTP contacts are provided by Arg110, Asp153, Arg156, Arg159, and Arg162.

This sequence belongs to the tRNA nucleotidyltransferase/poly(A) polymerase family. Bacterial CCA-adding enzyme type 3 subfamily. As to quaternary structure, homodimer. The cofactor is Mg(2+).

It carries out the reaction a tRNA precursor + 2 CTP + ATP = a tRNA with a 3' CCA end + 3 diphosphate. It catalyses the reaction a tRNA with a 3' CCA end + 2 CTP + ATP = a tRNA with a 3' CCACCA end + 3 diphosphate. Catalyzes the addition and repair of the essential 3'-terminal CCA sequence in tRNAs without using a nucleic acid template. Adds these three nucleotides in the order of C, C, and A to the tRNA nucleotide-73, using CTP and ATP as substrates and producing inorganic pyrophosphate. tRNA 3'-terminal CCA addition is required both for tRNA processing and repair. Also involved in tRNA surveillance by mediating tandem CCA addition to generate a CCACCA at the 3' terminus of unstable tRNAs. While stable tRNAs receive only 3'-terminal CCA, unstable tRNAs are marked with CCACCA and rapidly degraded. In Bacillus cereus (strain Q1), this protein is CCA-adding enzyme.